Here is a 257-residue protein sequence, read N- to C-terminus: Thiazole synthase (257 aa).

Residue Lys96 is the Schiff-base intermediate with DXP of the active site. Residues Gly157, 184 to 185, and 206 to 207 each bind 1-deoxy-D-xylulose 5-phosphate; these read AG and NT.

This sequence belongs to the ThiG family. As to quaternary structure, homotetramer. Forms heterodimers with either ThiH or ThiS.

It localises to the cytoplasm. The enzyme catalyses [ThiS sulfur-carrier protein]-C-terminal-Gly-aminoethanethioate + 2-iminoacetate + 1-deoxy-D-xylulose 5-phosphate = [ThiS sulfur-carrier protein]-C-terminal Gly-Gly + 2-[(2R,5Z)-2-carboxy-4-methylthiazol-5(2H)-ylidene]ethyl phosphate + 2 H2O + H(+). The protein operates within cofactor biosynthesis; thiamine diphosphate biosynthesis. Functionally, catalyzes the rearrangement of 1-deoxy-D-xylulose 5-phosphate (DXP) to produce the thiazole phosphate moiety of thiamine. Sulfur is provided by the thiocarboxylate moiety of the carrier protein ThiS. In vitro, sulfur can be provided by H(2)S. The sequence is that of Thiazole synthase from Bartonella quintana (strain Toulouse) (Rochalimaea quintana).